A 322-amino-acid chain; its full sequence is Ribose-phosphate pyrophosphokinase 1 (322 aa).

ATP is bound by residues 39 to 41 (DGE) and 98 to 99 (RQ). The Mg(2+) site is built by His-132 and Asp-173. Residue Lys-196 is part of the active site. D-ribose 5-phosphate-binding positions include Arg-198, Asp-224, and 228–232 (DTAGT).

Belongs to the ribose-phosphate pyrophosphokinase family. Class I subfamily. As to quaternary structure, homohexamer. Mg(2+) is required as a cofactor.

Its subcellular location is the cytoplasm. It catalyses the reaction D-ribose 5-phosphate + ATP = 5-phospho-alpha-D-ribose 1-diphosphate + AMP + H(+). It functions in the pathway metabolic intermediate biosynthesis; 5-phospho-alpha-D-ribose 1-diphosphate biosynthesis; 5-phospho-alpha-D-ribose 1-diphosphate from D-ribose 5-phosphate (route I): step 1/1. Functionally, involved in the biosynthesis of the central metabolite phospho-alpha-D-ribosyl-1-pyrophosphate (PRPP) via the transfer of pyrophosphoryl group from ATP to 1-hydroxyl of ribose-5-phosphate (Rib-5-P). This is Ribose-phosphate pyrophosphokinase 1 from Streptococcus pneumoniae serotype 4 (strain ATCC BAA-334 / TIGR4).